The sequence spans 288 residues: Sulfur carrier protein FdhD (288 aa).

The active-site Cysteine persulfide intermediate is the Cys122. A Mo-bis(molybdopterin guanine dinucleotide)-binding site is contributed by 268–273 (FVRGER).

The protein belongs to the FdhD family.

The protein resides in the cytoplasm. In terms of biological role, required for formate dehydrogenase (FDH) activity. Acts as a sulfur carrier protein that transfers sulfur from IscS to the molybdenum cofactor prior to its insertion into FDH. The chain is Sulfur carrier protein FdhD from Anaeromyxobacter dehalogenans (strain 2CP-1 / ATCC BAA-258).